Reading from the N-terminus, the 708-residue chain is Putative adhesion G protein-coupled receptor F2P (708 aa).

Topologically, residues 1–451 (MGLTAYGNRR…ESLILTYITY (451 aa)) are extracellular. Asn21, Asn220, Asn252, Asn260, Asn305, Asn313, and Asn358 each carry an N-linked (GlcNAc...) asparagine glycan. In terms of domain architecture, GAIN-B spans 293 to 442 (MGTTISGDNI…SILMSPHILE (150 aa)). 2 disulfides stabilise this stretch: Cys394–Cys421 and Cys409–Cys423. Residues 394 to 442 (CVGWHSVENRWDQQACKMIQENSQQAVCKCRPSKLFTSFSILMSPHILE) form a GPS region. A helical transmembrane segment spans residues 452–472 (VGLGISICSLILCLSIEVLVW). Topologically, residues 473 to 487 (SQVTKTEITYLRHVC) are cytoplasmic. Residues 488–508 (IVNIAATLLMADVWFIVASFL) traverse the membrane as a helical segment. Topologically, residues 509–530 (SGPITHHKGCVAATFFVHFFYL) are extracellular. The helical transmembrane segment at 531-551 (SVFFWMLAKALLILYGIMIVF) threads the bilayer. Over 552-557 (HTLPKS) the chain is Cytoplasmic. Residues 558–578 (VLVASLFSVGYGCPLAIAAIT) form a helical membrane-spanning segment. Residues 579–606 (VAATEPGKGYLRPEICWLNWDMTKALLA) are Extracellular-facing. The helical transmembrane segment at 607–627 (FVIPALAIVVVNLITVTLVIV) threads the bilayer. The Cytoplasmic portion of the chain corresponds to 628 to 650 (KTQRAAIGNSMFQEVRAIVRISK). Residues 651 to 671 (NIAILTPLLGLTWGFGVATVI) form a helical membrane-spanning segment. The Extracellular portion of the chain corresponds to 672 to 674 (DDR). The chain crosses the membrane as a helical span at residues 675–695 (SLAFHIIFSLLNAFQVSPDAS). Residues 696-708 (DQVQSERIHEDVL) are Cytoplasmic-facing.

It belongs to the G-protein coupled receptor 2 family. Adhesion G-protein coupled receptor (ADGR) subfamily. As to expression, high expression in kidney. Up-regulated in lung adenocarcinomas and prostate cancers.

It is found in the membrane. Its function is as follows. Orphan receptor. In Homo sapiens (Human), this protein is Putative adhesion G protein-coupled receptor F2P.